The following is a 292-amino-acid chain: Homoserine kinase (292 aa).

Residue 84 to 94 (PISRGLGSSSA) participates in ATP binding.

The protein belongs to the GHMP kinase family. Homoserine kinase subfamily.

Its subcellular location is the cytoplasm. It catalyses the reaction L-homoserine + ATP = O-phospho-L-homoserine + ADP + H(+). It functions in the pathway amino-acid biosynthesis; L-threonine biosynthesis; L-threonine from L-aspartate: step 4/5. Its function is as follows. Catalyzes the ATP-dependent phosphorylation of L-homoserine to L-homoserine phosphate. This is Homoserine kinase from Sulfurovum sp. (strain NBC37-1).